The chain runs to 145 residues: D-aminoacyl-tRNA deacylase (145 aa).

The Gly-cisPro motif, important for rejection of L-amino acids signature appears at Gly137–Pro138.

It belongs to the DTD family. In terms of assembly, homodimer.

The protein resides in the cytoplasm. The catalysed reaction is glycyl-tRNA(Ala) + H2O = tRNA(Ala) + glycine + H(+). It catalyses the reaction a D-aminoacyl-tRNA + H2O = a tRNA + a D-alpha-amino acid + H(+). In terms of biological role, an aminoacyl-tRNA editing enzyme that deacylates mischarged D-aminoacyl-tRNAs. Also deacylates mischarged glycyl-tRNA(Ala), protecting cells against glycine mischarging by AlaRS. Acts via tRNA-based rather than protein-based catalysis; rejects L-amino acids rather than detecting D-amino acids in the active site. By recycling D-aminoacyl-tRNA to D-amino acids and free tRNA molecules, this enzyme counteracts the toxicity associated with the formation of D-aminoacyl-tRNA entities in vivo and helps enforce protein L-homochirality. This Shewanella amazonensis (strain ATCC BAA-1098 / SB2B) protein is D-aminoacyl-tRNA deacylase.